A 103-amino-acid polypeptide reads, in one-letter code: uncharacterized protein (103 aa).

The span at 38–51 (TTTTSSTTSASTTS) shows a compositional bias: low complexity. Positions 38–70 (TTTTSSTTSASTTSQPSFSLPTSCNSNSPQSNL) are disordered. Positions 52–70 (QPSFSLPTSCNSNSPQSNL) are enriched in polar residues.

This is an uncharacterized protein from Dictyostelium discoideum (Social amoeba).